We begin with the raw amino-acid sequence, 632 residues long: MVIDSKQDLPQYTKDSGSESDSDSSNNFIVESPSIPSSKSATVVLNSEEYEDDEGDDLNGLDAELIDNITYEGDEDETMFVGLKEKQKLHLSGVFRLQVVKGGIVYNNVHYNASREILTFWHPLSQSIPTIDFSHFAGWQDTFFMPRNNRFKIRDEEFKSFPCVLRVFNSNHTGLLEAGHLYRDVNYLWKPKEPYFPLNERTTYHLLHESDRIQSLSVPGYWSTPLEKLYLSHKNAAYDTRIMVIGGKNSGKSTFLRLLLEKFTQDIRDSTTSQEELVYLDLDPGQPEYSLPDSISLNKILSSPISLGQHLCQGSNFQTLLQFYAGSSSPQDEPTSYLNCADKLIDHLEEQAFFGTSLLNLPGWIKGFGMQILNHIIRKYKPTHLLFLETANSKRHLDELTIPQSFSTSLRDAYAPEVVRVPAHSLNHTLSSRFHASQLRTFKILALFHKITQFDYDFAPLLKSAPLQISYGKGKSGIKGIQFPMEFQDLNPQDIKSALEGTVIGIYTYSGEDSLEVKSLNTFPILQSCTSSSKNFITLGLIHSIDTSQQIMNIYVPPCHTQILDKQPEDAQWIIVRNKTETPFCDFLPSPRTITWDDNIQIPFATFERRKKLEHVWKVRKNVMRRGQFMKR.

The segment at 1 to 42 (MVIDSKQDLPQYTKDSGSESDSDSSNNFIVESPSIPSSKSAT) is disordered. A compositionally biased stretch (polar residues) spans 26–42 (NNFIVESPSIPSSKSAT). 246–253 (GGKNSGKS) contributes to the ATP binding site.

It belongs to the Clp1 family. NOL9/GRC3 subfamily.

It is found in the nucleus. The protein resides in the nucleolus. Functionally, polynucleotide 5'-kinase involved in rRNA processing. Required for the efficient termination by RNA polymerase I and the processing of the IST2 pre-rRNA internal transcribed spacer localized between the 5.8S and 25S rRNAs. May act by maintaining the phosphorylated status of the downstream RNT1 cleavage product, which in turn allows the torpedo activity of RAT1 to efficiently terminate Pol I transcription. In vitro, displays polynucleotide kinase activity on both single- and double-stranded RNA and on single-stranded DNA alone, but not double-stranded DNA alone. The protein is Polynucleotide 5'-hydroxyl-kinase GRC3 (GRC3) of Saccharomyces cerevisiae (strain ATCC 204508 / S288c) (Baker's yeast).